Reading from the N-terminus, the 309-residue chain is tRNA pseudouridine synthase B (309 aa).

Aspartate 52 functions as the Nucleophile in the catalytic mechanism.

The protein belongs to the pseudouridine synthase TruB family. Type 1 subfamily.

The catalysed reaction is uridine(55) in tRNA = pseudouridine(55) in tRNA. Functionally, responsible for synthesis of pseudouridine from uracil-55 in the psi GC loop of transfer RNAs. In Leptospira interrogans serogroup Icterohaemorrhagiae serovar copenhageni (strain Fiocruz L1-130), this protein is tRNA pseudouridine synthase B.